The sequence spans 474 residues: PTS system MurNAc-GlcNAc-specific EIIBC component (474 aa).

The region spanning 5–87 (ERLAKDITHA…ADQSGATLAE (83 aa)) is the PTS EIIB type-1 domain. The active-site Phosphocysteine intermediate; for EIIB activity is the C27. Positions 124–474 (KSIANIFIPL…GTTKEMRNPE (351 aa)) constitute a PTS EIIC type-1 domain. The next 10 helical transmembrane spans lie at 129-149 (IFIPLIPAFIGAGLIGGIAAI), 167-187 (IVTVLNVIKDGMLFYLAIFTG), 193-213 (VFGATPGLGGVIGGTTLLTGI), 228-248 (LAAGQGGIIGVIFAVWLLSMV), 268-288 (ITLLLIGLLTIFIIMPLAGFV), 299-319 (IIGVGGIFSGFIIGAFFLPLV), 343-363 (LLPIAAMAGAGQVGAAIALWV), 378-398 (ALPVGFLGIGEPLIYGVTLPL), 402-422 (FFTACIGGGVGGAVIGGIGHI), and 444-464 (LGYIVGLLAAYAGGFIFTYFF).

The protein resides in the cell membrane. The enzyme catalyses N-acetyl-beta-D-muramate-(1-&gt;4)-N-acetyl-D-glucosamine(out) + N(pros)-phospho-L-histidyl-[protein] = 6-phospho-N-acetyl-beta-D-muramate-(1-&gt;4)-N-acetyl-D-glucosamine(in) + L-histidyl-[protein]. It participates in cell wall biogenesis; peptidoglycan recycling. Its function is as follows. The phosphoenolpyruvate-dependent sugar phosphotransferase system (sugar PTS), a major carbohydrate active transport system, catalyzes the phosphorylation of incoming sugar substrates concomitantly with their translocation across the cell membrane. This system is involved in the uptake and phosphorylation of MurNAc-GlcNAc, the principle peptidoglycan turnover product of S.aureus, yielding cytoplasmic MurNAc 6P-GlcNAc. This chain is PTS system MurNAc-GlcNAc-specific EIIBC component, found in Staphylococcus epidermidis (strain ATCC 35984 / DSM 28319 / BCRC 17069 / CCUG 31568 / BM 3577 / RP62A).